The following is a 327-amino-acid chain: GMP reductase (327 aa).

The active-site Thioimidate intermediate is Cys-176. Residue 205-228 coordinates NADP(+); that stretch reads IIADGGIRTHGDIAKSIRFGASMV.

The protein belongs to the IMPDH/GMPR family. GuaC type 2 subfamily.

It carries out the reaction IMP + NH4(+) + NADP(+) = GMP + NADPH + 2 H(+). Its function is as follows. Catalyzes the irreversible NADPH-dependent deamination of GMP to IMP. It functions in the conversion of nucleobase, nucleoside and nucleotide derivatives of G to A nucleotides, and in maintaining the intracellular balance of A and G nucleotides. This chain is GMP reductase, found in Streptococcus pyogenes serotype M28 (strain MGAS6180).